We begin with the raw amino-acid sequence, 146 residues long: Probable cyclic pyranopterin monophosphate synthase (146 aa).

Substrate is bound by residues 66-68 (LTH) and 102-103 (ME). Asp117 is an active-site residue.

It belongs to the MoaC family. As to quaternary structure, homohexamer; trimer of dimers.

The catalysed reaction is (8S)-3',8-cyclo-7,8-dihydroguanosine 5'-triphosphate = cyclic pyranopterin phosphate + diphosphate. Its pathway is cofactor biosynthesis; molybdopterin biosynthesis. Functionally, catalyzes the conversion of (8S)-3',8-cyclo-7,8-dihydroguanosine 5'-triphosphate to cyclic pyranopterin monophosphate (cPMP). This is Probable cyclic pyranopterin monophosphate synthase from Aeropyrum pernix (strain ATCC 700893 / DSM 11879 / JCM 9820 / NBRC 100138 / K1).